The chain runs to 138 residues: Acidic phospholipase A2 CH-E6' (138 aa).

The signal sequence occupies residues 1-16 (MRTLWIVAVLLLGVEG). Cystine bridges form between Cys-42–Cys-131, Cys-44–Cys-60, Cys-59–Cys-111, Cys-65–Cys-138, Cys-66–Cys-104, Cys-73–Cys-97, and Cys-91–Cys-102. Residues Tyr-43, Gly-45, and Gly-47 each contribute to the Ca(2+) site. Residue His-63 is part of the active site. A Ca(2+)-binding site is contributed by Asp-64. Residue Asp-105 is part of the active site.

The protein belongs to the phospholipase A2 family. Group II subfamily. D49 sub-subfamily. Ca(2+) serves as cofactor. Expressed by the venom gland.

Its subcellular location is the secreted. It carries out the reaction a 1,2-diacyl-sn-glycero-3-phosphocholine + H2O = a 1-acyl-sn-glycero-3-phosphocholine + a fatty acid + H(+). Functionally, snake venom phospholipase A2 (PLA2) that shows high lipolytic and weak ADP-induced platelet aggregation activities. Also shows weak anticoagulant activity. PLA2 catalyzes the calcium-dependent hydrolysis of the 2-acyl groups in 3-sn-phosphoglycerides. In Crotalus horridus (Timber rattlesnake), this protein is Acidic phospholipase A2 CH-E6'.